The primary structure comprises 298 residues: MDSVTPTLPRNILSIQSWVSYGHVGNAAAIFPLQRLGFEVWGVHTVQFSNHTGYGAWTGPVFEPGVIAELLDGIEARGVLPQCDGVLSGYVGSGGTVAAVVGAVGRVRQAHPQALYCCDPVMGDVGRGVFVHPDLPALIAAQAIPAADIVTPNQFELELLTGQKVETLADALAAAHALRERLNPAGPRIVLLTSLVRADAPASSIETLAVTGEGSWLCRTPLLPLDPPRNGTGDAIAALFYGQFLRTGSAEQALTLSMSALYALLDLTHRLGTREIQLVAAQGEFERPRHLFAAERVE.

Substrate is bound at residue Ser-17. The ATP site is built by Asp-119 and Glu-156. Asp-234 is a substrate binding site.

The protein belongs to the pyridoxine kinase family. PdxY subfamily. In terms of assembly, homodimer. It depends on Mg(2+) as a cofactor.

The enzyme catalyses pyridoxal + ATP = pyridoxal 5'-phosphate + ADP + H(+). The protein operates within cofactor metabolism; pyridoxal 5'-phosphate salvage; pyridoxal 5'-phosphate from pyridoxal: step 1/1. In terms of biological role, pyridoxal kinase involved in the salvage pathway of pyridoxal 5'-phosphate (PLP). Catalyzes the phosphorylation of pyridoxal to PLP. The sequence is that of Pyridoxal kinase PdxY from Deinococcus radiodurans (strain ATCC 13939 / DSM 20539 / JCM 16871 / CCUG 27074 / LMG 4051 / NBRC 15346 / NCIMB 9279 / VKM B-1422 / R1).